A 140-amino-acid polypeptide reads, in one-letter code: MYTIEQIKEVIPHRYPFLLVDRILEVEEGKRAVGIKNVTANEEFFNGHFPDYNVMPGVLIVEALAQVGAFAVLKMEQNQGKLAFFAGIENCRFKRQVVPGDQLRLEVELTKLRGPIGKGRATATVDGEVACTAELTFAIK.

Residue His48 is part of the active site.

It belongs to the thioester dehydratase family. FabZ subfamily.

It localises to the cytoplasm. The catalysed reaction is a (3R)-hydroxyacyl-[ACP] = a (2E)-enoyl-[ACP] + H2O. In terms of biological role, involved in unsaturated fatty acids biosynthesis. Catalyzes the dehydration of short chain beta-hydroxyacyl-ACPs and long chain saturated and unsaturated beta-hydroxyacyl-ACPs. This Exiguobacterium sibiricum (strain DSM 17290 / CCUG 55495 / CIP 109462 / JCM 13490 / 255-15) protein is 3-hydroxyacyl-[acyl-carrier-protein] dehydratase FabZ.